Reading from the N-terminus, the 245-residue chain is NAD-dependent protein deacetylase (245 aa).

A Deacetylase sirtuin-type domain is found at M1 to K245. NAD(+)-binding residues include A26, T30, F37, R38, Q105, I107, D108, and H123. A nicotinamide-binding site is contributed by F37. Nicotinamide is bound by residues I107 and D108. H123 (proton acceptor) is an active-site residue. Zn(2+)-binding residues include C131, C134, C151, and C154. Residues T190, S191, N216, and I234 each contribute to the NAD(+) site.

This sequence belongs to the sirtuin family. Class U subfamily. The cofactor is Zn(2+).

Its subcellular location is the cytoplasm. It catalyses the reaction N(6)-acetyl-L-lysyl-[protein] + NAD(+) + H2O = 2''-O-acetyl-ADP-D-ribose + nicotinamide + L-lysyl-[protein]. In terms of biological role, NAD-dependent protein deacetylase which modulates the activities of several enzymes which are inactive in their acetylated form. The chain is NAD-dependent protein deacetylase from Bacillus cereus (strain ZK / E33L).